The primary structure comprises 440 residues: Transposon Ty1-NL2 Gag polyprotein (440 aa).

Composition is skewed to polar residues over residues 1 to 23 (MESQ…SVTS), 48 to 60 (TKAN…TPAS), 71 to 97 (SPQT…NQAN), and 129 to 152 (QFPQ…GNTF). Disordered regions lie at residues 1–97 (MESQ…NQAN), 129–171 (QFPQ…YVRP), and 352–440 (GSRN…PETY). The segment covering 153–165 (TDSSSADSDMTST) has biased composition (low complexity). Residues 299–401 (NNGIHINNKV…NSKSKTARAH (103 aa)) are RNA-binding. Low complexity predominate over residues 402–418 (NVSTSNNSPSTDNDSIS). Phosphoserine is present on Ser416. Positions 419-428 (KSTTEPIQLN) are enriched in polar residues. The span at 429-440 (NKHDLHLRPETY) shows a compositional bias: basic and acidic residues.

As to quaternary structure, homotrimer.

The protein resides in the cytoplasm. Functionally, capsid protein (CA) is the structural component of the virus-like particle (VLP), forming the shell that encapsulates the retrotransposons dimeric RNA genome. The particles are assembled from trimer-clustered units and there are holes in the capsid shells that allow for the diffusion of macromolecules. CA also has nucleocapsid-like chaperone activity, promoting primer tRNA(i)-Met annealing to the multipartite primer-binding site (PBS), dimerization of Ty1 RNA and initiation of reverse transcription. This is Transposon Ty1-NL2 Gag polyprotein (TY1A-NL2) from Saccharomyces cerevisiae (strain ATCC 204508 / S288c) (Baker's yeast).